Reading from the N-terminus, the 250-residue chain is Ino eighty subunit 3 (250 aa).

Residues Pro-29 to His-70 form a disordered region. Low complexity predominate over residues Ser-52–His-70. Residues Ser-157 and Ser-211 each carry the phosphoserine modification.

In terms of assembly, component of the chromatin-remodeling INO80 complex, at least composed of ARP4, ARP5, ARP8, RVB1, RVB2, TAF14, NHP10, IES1, IES3, IES4, IES6, ACT1, IES2, IES5 and INO80.

Its subcellular location is the nucleus. Functionally, probably involved in transcription regulation via its interaction with the INO80 complex, a chromatin-remodeling complex. This chain is Ino eighty subunit 3 (IES3), found in Saccharomyces cerevisiae (strain ATCC 204508 / S288c) (Baker's yeast).